A 1013-amino-acid polypeptide reads, in one-letter code: Ephrin type-A receptor 5 (1013 aa).

The first 31 residues, 1-31 (MGLRGGGGRAGGPAPGWTCLLLCAALRSLLA), serve as a signal peptide directing secretion. The Extracellular segment spans residues 32–549 (SPGSEVNLLD…AASSDQSQIP (518 aa)). An Eph LBD domain is found at 36-214 (EVNLLDSRTV…YYKKCPSVIR (179 aa)). Residues Asn-240, Asn-275, Asn-345, Asn-399, Asn-412, and Asn-437 are each glycosylated (N-linked (GlcNAc...) asparagine). Fibronectin type-III domains are found at residues 333–443 (PPSA…TNQA) and 444–538 (APSP…TSPV). The chain crosses the membrane as a helical span at residues 550-570 (IIVVSVTVGVILLAVVIGFLL). The Cytoplasmic segment spans residues 571–1013 (SGSCCDHGCG…VQLVNGMVPL (443 aa)). A phosphotyrosine; by autocatalysis mark is found at Tyr-626 and Tyr-632. The 262-residue stretch at 651–912 (ITIERVIGAG…EIVSMLDKLI (262 aa)) folds into the Protein kinase domain. ATP contacts are provided by residues 657–665 (IGAGEFGEV) and Lys-683. Asp-776 acts as the Proton acceptor in catalysis. 2 positions are modified to phosphotyrosine; by autocatalysis: Tyr-809 and Tyr-958. Residues 941 to 1013 (GAYRSVGEWL…VQLVNGMVPL (73 aa)) form the SAM domain. Residues 1011 to 1013 (VPL) carry the PDZ-binding motif.

Belongs to the protein kinase superfamily. Tyr protein kinase family. Ephrin receptor subfamily. Heterotetramer upon binding of the ligand. The heterotetramer is composed of an ephrin dimer and a receptor dimer. Oligomerization is probably required to induce biological responses. Post-translationally, phosphorylated. Phosphorylation is stimulated by the ligand EFNA5. Detected in the 10-day embryonic brain, weaker expression in the rest of the 10-day embryo. Undetected in adult tissues.

The protein localises to the cell membrane. The protein resides in the cell projection. It is found in the axon. Its subcellular location is the dendrite. It carries out the reaction L-tyrosyl-[protein] + ATP = O-phospho-L-tyrosyl-[protein] + ADP + H(+). Receptor tyrosine kinase which binds promiscuously GPI-anchored ephrin-A family ligands residing on adjacent cells, leading to contact-dependent bidirectional signaling into neighboring cells. The signaling pathway downstream of the receptor is referred to as forward signaling while the signaling pathway downstream of the ephrin ligand is referred to as reverse signaling. Among GPI-anchored ephrin-A ligands, EFNA5 most probably constitutes the cognate/functional ligand for EPHA5. Functions as an axon guidance molecule during development and may be involved in the development of the retinotectal, entorhino-hippocampal and hippocamposeptal pathways. Together with EFNA5 plays also a role in synaptic plasticity in adult brain through regulation of synaptogenesis. The protein is Ephrin type-A receptor 5 (EPHA5) of Gallus gallus (Chicken).